We begin with the raw amino-acid sequence, 431 residues long: Selenocysteine lyase (431 aa).

N6-(pyridoxal phosphate)lysine is present on Lys-239. Catalysis depends on Cys-367, which acts as the S-selanylcysteine intermediate.

It belongs to the class-V pyridoxal-phosphate-dependent aminotransferase family. Homodimer. Requires pyridoxal 5'-phosphate as cofactor.

Its subcellular location is the cytoplasm. The protein localises to the cytosol. It catalyses the reaction L-selenocysteine + AH2 = hydrogenselenide + L-alanine + A + H(+). Functionally, catalyzes the decomposition of L-selenocysteine to L-alanine and elemental selenium. In Xenopus tropicalis (Western clawed frog), this protein is Selenocysteine lyase (scly).